The following is a 709-amino-acid chain: Polyribonucleotide nucleotidyltransferase (709 aa).

Residues Asp-489 and Asp-495 each coordinate Mg(2+). Residues 556 to 615 (PKIDMIKIDVDKIKVVIGKGGETIDKIIAETGVKIDIDEEGNVSIFSSDQAAIDRTKDII) form the KH domain. Positions 625–693 (GEVYHAKVVR…DKGRVDASMK (69 aa)) constitute an S1 motif domain.

Belongs to the polyribonucleotide nucleotidyltransferase family. It depends on Mg(2+) as a cofactor.

The protein localises to the cytoplasm. It catalyses the reaction RNA(n+1) + phosphate = RNA(n) + a ribonucleoside 5'-diphosphate. Functionally, involved in mRNA degradation. Catalyzes the phosphorolysis of single-stranded polyribonucleotides processively in the 3'- to 5'-direction. This Streptococcus agalactiae serotype III (strain NEM316) protein is Polyribonucleotide nucleotidyltransferase.